The primary structure comprises 218 residues: Histone H1 (218 aa).

A compositionally biased stretch (low complexity) spans 1–19; the sequence is MSETAPVAAPAVSAPGAKA. Disordered regions lie at residues 1 to 42 and 89 to 218; these read MSET…PSVT and VSKG…TKKK. Position 2 is an N-acetylserine (serine 2). In terms of domain architecture, H15 spans 37-110; sequence AGPSVTELIT…GASGSFKLNK (74 aa). Basic residues-rich tracts occupy residues 118–133, 141–158, 166–184, and 191–218; these read KATK…KPAA, KKPK…KAKK, KAAK…KKTA, and KAVK…TKKK.

Belongs to the histone H1/H5 family.

It localises to the nucleus. Its subcellular location is the chromosome. Histones H1 are necessary for the condensation of nucleosome chains into higher-order structures. This chain is Histone H1, found in Gallus gallus (Chicken).